The chain runs to 311 residues: Aspartate carbamoyltransferase catalytic subunit (311 aa).

Positions 57 and 58 each coordinate carbamoyl phosphate. Position 86 (Lys-86) interacts with L-aspartate. The carbamoyl phosphate site is built by Arg-107, His-135, and Gln-138. L-aspartate-binding residues include Arg-168 and Arg-230. Leu-269 and Pro-270 together coordinate carbamoyl phosphate.

This sequence belongs to the aspartate/ornithine carbamoyltransferase superfamily. ATCase family. Heterooligomer of catalytic and regulatory chains.

The enzyme catalyses carbamoyl phosphate + L-aspartate = N-carbamoyl-L-aspartate + phosphate + H(+). It participates in pyrimidine metabolism; UMP biosynthesis via de novo pathway; (S)-dihydroorotate from bicarbonate: step 2/3. In terms of biological role, catalyzes the condensation of carbamoyl phosphate and aspartate to form carbamoyl aspartate and inorganic phosphate, the committed step in the de novo pyrimidine nucleotide biosynthesis pathway. In Staphylothermus marinus (strain ATCC 43588 / DSM 3639 / JCM 9404 / F1), this protein is Aspartate carbamoyltransferase catalytic subunit.